The sequence spans 419 residues: Isocitrate dehydrogenase [NADP] 1 (419 aa).

Thr-105 contributes to the NADP(+) binding site. Ser-114, Asn-116, Arg-120, Arg-130, and Arg-154 together coordinate D-threo-isocitrate. Mg(2+) is bound at residue Asp-308. Residues 340-346 (HGTAPKY), Asn-353, Tyr-392, and Arg-396 each bind NADP(+).

This sequence belongs to the isocitrate and isopropylmalate dehydrogenases family. As to quaternary structure, homodimer. Mg(2+) serves as cofactor. Requires Mn(2+) as cofactor.

The enzyme catalyses D-threo-isocitrate + NADP(+) = 2-oxoglutarate + CO2 + NADPH. With respect to regulation, IDH activity is not significantly affected by monovalent cations. The combined addition of Mn(2+) and another divalent cation results in the decrease of the activity. In terms of biological role, catalyzes the oxidative decarboxylation of isocitrate to 2-oxoglutarate and carbon dioxide with the concomitant reduction of NADP(+). Cannot use NAD(+). This Psychrobacter sp. (strain 13A) protein is Isocitrate dehydrogenase [NADP] 1.